The chain runs to 179 residues: Large ribosomal subunit protein uL5 (179 aa).

This sequence belongs to the universal ribosomal protein uL5 family. In terms of assembly, part of the 50S ribosomal subunit; part of the 5S rRNA/L5/L18/L25 subcomplex. Contacts the 5S rRNA and the P site tRNA. Forms a bridge to the 30S subunit in the 70S ribosome.

Functionally, this is one of the proteins that bind and probably mediate the attachment of the 5S RNA into the large ribosomal subunit, where it forms part of the central protuberance. In the 70S ribosome it contacts protein S13 of the 30S subunit (bridge B1b), connecting the 2 subunits; this bridge is implicated in subunit movement. Contacts the P site tRNA; the 5S rRNA and some of its associated proteins might help stabilize positioning of ribosome-bound tRNAs. The sequence is that of Large ribosomal subunit protein uL5 from Halalkalibacterium halodurans (strain ATCC BAA-125 / DSM 18197 / FERM 7344 / JCM 9153 / C-125) (Bacillus halodurans).